Reading from the N-terminus, the 71-residue chain is R-phycoerythrin gamma-1 chain, chloroplastic (71 aa).

The phycourobilin site is built by C25 and C34. C49 contributes to the (2R,3E)-phycoerythrobilin binding site. C58 lines the phycourobilin pocket.

Heteromer of 6 alpha, 6 beta and 1 gamma chains. In terms of processing, contains four covalently linked bilin chromophores.

The protein resides in the plastid. It is found in the chloroplast thylakoid membrane. Its function is as follows. Critical for the incorporation of phycoerythrin in the phycobilisome complex. The polypeptide is R-phycoerythrin gamma-1 chain, chloroplastic (Gastroclonium coulteri (Red alga)).